The primary structure comprises 433 residues: 3-phosphoshikimate 1-carboxyvinyltransferase (433 aa).

Residues lysine 15, serine 16, and arginine 20 each contribute to the 3-phosphoshikimate site. Lysine 15 is a binding site for phosphoenolpyruvate. 2 residues coordinate phosphoenolpyruvate: glycine 96 and arginine 124. 3-phosphoshikimate-binding residues include serine 169, glutamine 171, serine 195, aspartate 318, and lysine 345. Residue glutamine 171 participates in phosphoenolpyruvate binding. Aspartate 318 functions as the Proton acceptor in the catalytic mechanism. 2 residues coordinate phosphoenolpyruvate: arginine 349 and arginine 393.

It belongs to the EPSP synthase family. As to quaternary structure, monomer.

It is found in the cytoplasm. The catalysed reaction is 3-phosphoshikimate + phosphoenolpyruvate = 5-O-(1-carboxyvinyl)-3-phosphoshikimate + phosphate. It participates in metabolic intermediate biosynthesis; chorismate biosynthesis; chorismate from D-erythrose 4-phosphate and phosphoenolpyruvate: step 6/7. Functionally, catalyzes the transfer of the enolpyruvyl moiety of phosphoenolpyruvate (PEP) to the 5-hydroxyl of shikimate-3-phosphate (S3P) to produce enolpyruvyl shikimate-3-phosphate and inorganic phosphate. The sequence is that of 3-phosphoshikimate 1-carboxyvinyltransferase from Chlorobium luteolum (strain DSM 273 / BCRC 81028 / 2530) (Pelodictyon luteolum).